A 162-amino-acid chain; its full sequence is Probable cytosine deaminase (162 aa).

The region spanning E8 to L132 is the CMP/dCMP-type deaminase domain. H59 serves as a coordination point for Zn(2+). E61 functions as the Proton donor in the catalytic mechanism. Zn(2+) contacts are provided by C87 and C90. Substrate is bound at residue D159.

This sequence belongs to the cytidine and deoxycytidylate deaminase family. In terms of assembly, homodimer. Requires Zn(2+) as cofactor.

It is found in the cytoplasm. Its subcellular location is the nucleus. It carries out the reaction cytosine + H2O + H(+) = uracil + NH4(+). It functions in the pathway pyrimidine metabolism; UMP biosynthesis via salvage pathway; uracil from cytosine: step 1/1. Catalyzes the hydrolytic deamination of cytosine to uracil or 5-methylcytosine to thymine. Is involved in the pyrimidine salvage pathway, which allows the cell to utilize cytosine for pyrimidine nucleotide synthesis. In Schizosaccharomyces pombe (strain 972 / ATCC 24843) (Fission yeast), this protein is Probable cytosine deaminase.